The chain runs to 749 residues: Subtilisin-like protease SBT4.14 (749 aa).

Positions 1-28 are cleaved as a signal peptide; the sequence is MIRSKCSCHHHLLVLVMVVLWISPRYAS. The propeptide at 29–115 is activation peptide; sequence AEDEHAKDFY…VSRNQYRKLH (87 aa). The 78-residue stretch at 38–115 folds into the Inhibitor I9 domain; it reads YIIYLGDRPD…VSRNQYRKLH (78 aa). The Peptidase S8 domain occupies 119-595; it reads SWDFVGLPLT…GGQINPRRAA (477 aa). Aspartate 145 (charge relay system) is an active-site residue. The N-linked (GlcNAc...) asparagine glycan is linked to asparagine 176. Histidine 210 (charge relay system) is an active-site residue. N-linked (GlcNAc...) asparagine glycans are attached at residues asparagine 225, asparagine 233, asparagine 446, and asparagine 458. The active-site Charge relay system is serine 536. N-linked (GlcNAc...) asparagine glycosylation occurs at asparagine 618.

The protein belongs to the peptidase S8 family. The C-terminal propeptide is autocleaved. As to expression, expressed only in roots, particularly in xylem.

The protein is Subtilisin-like protease SBT4.14 of Arabidopsis thaliana (Mouse-ear cress).